A 206-amino-acid chain; its full sequence is Protein GET1 (206 aa).

Over 1-4 (MPSL) the chain is Lumenal. The chain crosses the membrane as a helical span at residues 5 to 24 (LITVLFLNVIIYVVNTVGAA). Residues 25–110 (TVDGLLWLLY…TFDMTIKIAR (86 aa)) lie on the Cytoplasmic side of the membrane. The stretch at 75–100 (AKLRRRHDKALEAYEAKNNELTQSKS) forms a coiled coil. A helical transmembrane segment spans residues 111–131 (WAATSGLMLFLQFWYSKTPIF). Residues 132 to 155 (TLPPGWIPWQVQWVLSFPRAPMGT) lie on the Lumenal side of the membrane. The helical transmembrane segment at 156–172 (VSIQIWGGACATVVALV) threads the bilayer. Over 173-206 (GDAMKASLAYVSKPKIDRIKLGATMEGKEGKKRQ) the chain is Cytoplasmic.

Belongs to the WRB/GET1 family. As to quaternary structure, interacts with GET3.

It localises to the endoplasmic reticulum membrane. Required for the post-translational delivery of tail-anchored (TA) proteins to the endoplasmic reticulum. Acts as a membrane receptor for soluble GET3, which recognizes and selectively binds the transmembrane domain of TA proteins in the cytosol. This chain is Protein GET1, found in Ajellomyces capsulatus (strain G186AR / H82 / ATCC MYA-2454 / RMSCC 2432) (Darling's disease fungus).